A 560-amino-acid chain; its full sequence is MAENWRSRIITEGIQRTPNRAMLRAVGFGDEDFNKPIVGVASAHSTITPCNMGIAALASRAEAGIRAAGGMPQLFGTITVSDGISMGTEGMKYSLVSRDVIADSIETVCNAQSMDGVLAIGGCDKNMPGAMIAMARMNIPAIFVYGGTIKPGHWQGQDLTVVSAFEAVGQFSAGKMDEATLHAIEHHACPGAGSCGGMFTANTMSSAFEAMGMSLMYSSTMTAEDAEKADSTELAGKVLVEAIRKNIRPRDIITRKSIENAISVIMAVGGSTNAVLHFLAIAHSAEVPLTIDDFETIRQRVPVLCDLKPSGKYVTADLHRAGGIPQVMKMLLNAGLLHGDCLTITGETIAERLRHVPDTPDPNQDVIRPFDQPLYATGHLAILKGNLASEGAVAKISGVKNPQITGPARVFDSEEDCLDAILAGKINPGDVIVIRYEGPVGGPGMREMLAPTSAIIGAGLGDSVGLITDGRFSGGTYGMVVGHVAPEAAVGGTIALVQEGDSITIDAHRRLLQLNVSEEELAARRAKWQPPAPRYTRGVLAKYAKLVSSSSLGAVTDRFV.

A [2Fe-2S] cluster-binding site is contributed by Cys-50. Asp-82 serves as a coordination point for Mg(2+). Cys-123 contributes to the [2Fe-2S] cluster binding site. Residues Asp-124 and Lys-125 each contribute to the Mg(2+) site. An N6-carboxylysine modification is found at Lys-125. Cys-195 is a binding site for [2Fe-2S] cluster. Residue Glu-447 coordinates Mg(2+). Ser-473 acts as the Proton acceptor in catalysis.

It belongs to the IlvD/Edd family. Homodimer. [2Fe-2S] cluster serves as cofactor. The cofactor is Mg(2+).

The enzyme catalyses (2R)-2,3-dihydroxy-3-methylbutanoate = 3-methyl-2-oxobutanoate + H2O. It catalyses the reaction (2R,3R)-2,3-dihydroxy-3-methylpentanoate = (S)-3-methyl-2-oxopentanoate + H2O. The protein operates within amino-acid biosynthesis; L-isoleucine biosynthesis; L-isoleucine from 2-oxobutanoate: step 3/4. Its pathway is amino-acid biosynthesis; L-valine biosynthesis; L-valine from pyruvate: step 3/4. Functionally, functions in the biosynthesis of branched-chain amino acids. Catalyzes the dehydration of (2R,3R)-2,3-dihydroxy-3-methylpentanoate (2,3-dihydroxy-3-methylvalerate) into 2-oxo-3-methylpentanoate (2-oxo-3-methylvalerate) and of (2R)-2,3-dihydroxy-3-methylbutanoate (2,3-dihydroxyisovalerate) into 2-oxo-3-methylbutanoate (2-oxoisovalerate), the penultimate precursor to L-isoleucine and L-valine, respectively. The chain is Dihydroxy-acid dehydratase from Thermosynechococcus vestitus (strain NIES-2133 / IAM M-273 / BP-1).